We begin with the raw amino-acid sequence, 340 residues long: Serpentine receptor class alpha-18 (340 aa).

6 helical membrane-spanning segments follow: residues 29–49, 109–129, 149–169, 198–218, 249–269, and 285–305; these read FNFI…WLAI, VFEL…VFSL, FIAT…FYIV, VRTG…YVCV, ISIV…NLLI, and IVSF…VIYF.

Belongs to the nematode receptor-like protein sra family.

It localises to the membrane. This is Serpentine receptor class alpha-18 (sra-18) from Caenorhabditis elegans.